A 610-amino-acid polypeptide reads, in one-letter code: Elongation factor 4 (610 aa).

Positions 11–193 constitute a tr-type G domain; sequence EKIRNFSIIA…QIVEKVPAPT (183 aa). Residues 23–28 and 140–143 each bind GTP; these read DHGKST and NKID.

This sequence belongs to the TRAFAC class translation factor GTPase superfamily. Classic translation factor GTPase family. LepA subfamily.

Its subcellular location is the cell membrane. It catalyses the reaction GTP + H2O = GDP + phosphate + H(+). In terms of biological role, required for accurate and efficient protein synthesis under certain stress conditions. May act as a fidelity factor of the translation reaction, by catalyzing a one-codon backward translocation of tRNAs on improperly translocated ribosomes. Back-translocation proceeds from a post-translocation (POST) complex to a pre-translocation (PRE) complex, thus giving elongation factor G a second chance to translocate the tRNAs correctly. Binds to ribosomes in a GTP-dependent manner. The chain is Elongation factor 4 from Streptococcus pyogenes serotype M6 (strain ATCC BAA-946 / MGAS10394).